A 513-amino-acid polypeptide reads, in one-letter code: ATP synthase subunit alpha 1 (513 aa).

169–176 (GDRQTGKT) is an ATP binding site.

This sequence belongs to the ATPase alpha/beta chains family. As to quaternary structure, F-type ATPases have 2 components, CF(1) - the catalytic core - and CF(0) - the membrane proton channel. CF(1) has five subunits: alpha(3), beta(3), gamma(1), delta(1), epsilon(1). CF(0) has three main subunits: a(1), b(2) and c(9-12). The alpha and beta chains form an alternating ring which encloses part of the gamma chain. CF(1) is attached to CF(0) by a central stalk formed by the gamma and epsilon chains, while a peripheral stalk is formed by the delta and b chains.

It is found in the cell inner membrane. The catalysed reaction is ATP + H2O + 4 H(+)(in) = ADP + phosphate + 5 H(+)(out). Functionally, produces ATP from ADP in the presence of a proton gradient across the membrane. The alpha chain is a regulatory subunit. This Photobacterium profundum (strain SS9) protein is ATP synthase subunit alpha 1.